The primary structure comprises 775 residues: MASLIYRQLLTNSYSVDLHDEIEQIGSEKTQNVTVNPGPFAQTRYAPVNWGHGEINDSTTVELILDGPYQPTTFTPPIDYWILINSNTNGVVYESTNNSDFWTAVVAVEPHVSPVDRQYTVFGENKQFNVRNDSDKWKFLEMFRSSSQNEFYNRRTLTSDTKLVGILRYGGRIWTFHGETPRVNTDSSHNANLNDISIVIHSGFYIIPRSQECKCNEYINNGLPPIPNTRNVVPLSLSSRSIQYKRAQVNEDITISKTSLWKECTIIRDIIIRFKFGNSIVKLGGLGYKWSEISYKAANYQYNYLRDGEQVTAHTTCSVNGVNNFSYNGGFLPTDFSVSRYEVIKENSYVYVDYWDDSKAFRNMVYVRSLAANLNSVKCTGGSYDFSIPVGAWPVITGGAVSLHFAGVTLSTQFTDFVSLNSLRFRFSKTVDEPSFSILRTRTVNLYGLPAANPNNGNEYYEISGRFSLISLVPTNDDYQTPIMNSVTVRQDLERQLTDLREEFNSLSQEIAMSQLIDLALLPLDMFSMFSGIKSTIDLTKSMATSVMKKFRKSKLATSISEMTNSLSDAASSASRSVSIRSNISTISNWTNVSNDVSNVTNSLNDISTQTSTISKNLRLKEMITPTEGMSLDDISAAVLKTKIDMSTPIGKNTLPDIVPEASEKFIPKRSFRILKDDEVMEINTEGDVFAYKIDTLNEVPFDVNKFAELVTNSPVISAIIDFKTLKNLNDNYGITRIEALNLIKSNPNVLRDFINQNNPIIRNRIEQLILQCKL.

The spike head stretch occupies residues 65-223 (LDGPYQPTTF…KCNEYINNGL (159 aa)). The tract at residues 247–478 (AQVNEDITIS…LISLVPTNDD (232 aa)) is spike body and stalk (antigen domain). Positions 307–309 (DGE) match the DGE motif; interaction with ITGA2/ITGB1 heterodimer motif. A disulfide bridge connects residues C317 and C379. The tract at residues 388-408 (IPVGAWPVITGGAVSLHFAGV) is hydrophobic; possible role in virus entry into host cell. A YGL motif; interaction with ITGA4 motif is present at residues 447-449 (YGL). Residues 483–510 (IMNSVTVRQDLERQLTDLREEFNSLSQE) are a coiled coil. The interval 509-775 (QEIAMSQLID…IEQLILQCKL (267 aa)) is spike foot. The short motif at 643 to 645 (KID) is the KID motif; interaction with HSPA8 element.

This sequence belongs to the rotavirus VP4 family. As to quaternary structure, homotrimer. VP4 adopts a dimeric appearance above the capsid surface, while forming a trimeric base anchored inside the capsid layer. Only hints of the third molecule are observed above the capsid surface. It probably performs a series of molecular rearrangements during viral entry. Prior to trypsin cleavage, it is flexible. The priming trypsin cleavage triggers its rearrangement into rigid spikes with approximate two-fold symmetry of their protruding parts. After an unknown second triggering event, cleaved VP4 may undergo another rearrangement, in which two VP5* subunits fold back on themselves and join a third subunit to form a tightly associated trimer, shaped like a folded umbrella. Interacts with VP6. Interacts with VP7. Homotrimer. The trimer is coiled-coil stabilized by its C-terminus, however, its N-terminus, known as antigen domain or 'body', seems to be flexible allowing it to self-associate either as a dimer or a trimer. Proteolytic cleavage by trypsin results in activation of VP4 functions and greatly increases infectivity. The penetration into the host cell is dependent on trypsin treatment of VP4. It produces two peptides, VP5* and VP8* that remain associated with the virion. Cleavage of VP4 by trypsin probably occurs in vivo in the lumen of the intestine prior to infection of enterocytes. Trypsin seems to be incorporated into the three-layered viral particles but remains inactive as long as the viral outer capsid is intact and would only be activated upon the solubilization of the latter.

The protein resides in the virion. The protein localises to the host rough endoplasmic reticulum. It localises to the host cell membrane. It is found in the host cytoplasm. Its subcellular location is the host cytoskeleton. The protein resides in the host endoplasmic reticulum-Golgi intermediate compartment. In terms of biological role, spike-forming protein that mediates virion attachment to the host epithelial cell receptors and plays a major role in cell penetration, determination of host range restriction and virulence. Rotavirus attachment and entry into the host cell probably involves multiple sequential contacts between the outer capsid proteins VP4 and VP7, and the cell receptors. It is subsequently lost, together with VP7, following virus entry into the host cell. Following entry into the host cell, low intracellular or intravesicular Ca(2+) concentration probably causes the calcium-stabilized VP7 trimers to dissociate from the virion. This step is probably necessary for the membrane-disrupting entry step and the release of VP4, which is locked onto the virion by VP7. During the virus exit from the host cell, VP4 seems to be required to target the newly formed virions to the host cell lipid rafts. Forms the spike 'foot' and 'body' and acts as a membrane permeabilization protein that mediates release of viral particles from endosomal compartments into the cytoplasm. During entry, the part of VP5* that protrudes from the virus folds back on itself and reorganizes from a local dimer to a trimer. This reorganization may be linked to membrane penetration by exposing VP5* hydrophobic region. In integrin-dependent strains, VP5* targets the integrin heterodimer ITGA2/ITGB1 for cell attachment. Its function is as follows. Forms the head of the spikes and mediates the recognition of specific host cell surface glycans. It is the viral hemagglutinin and an important target of neutralizing antibodies. In sialic acid-dependent strains, VP8* binds to host cell sialic acid, most probably a ganglioside, providing the initial contact. In some other strains, VP8* mediates the attachment to histo-blood group antigens (HBGAs) for viral entry. This is Outer capsid protein VP4 from Rotavirus A (strain RVA/Human/Japan/MO/1982/G3P1A[8]) (RV-A).